Consider the following 292-residue polypeptide: tRNA pseudouridine synthase B (292 aa).

D38 (nucleophile) is an active-site residue.

The protein belongs to the pseudouridine synthase TruB family. Type 1 subfamily.

The catalysed reaction is uridine(55) in tRNA = pseudouridine(55) in tRNA. Functionally, responsible for synthesis of pseudouridine from uracil-55 in the psi GC loop of transfer RNAs. The polypeptide is tRNA pseudouridine synthase B (Streptococcus pneumoniae serotype 2 (strain D39 / NCTC 7466)).